The following is a 332-amino-acid chain: Probable allantoicase (332 aa).

It belongs to the allantoicase family.

It carries out the reaction allantoate + H2O = (S)-ureidoglycolate + urea. It functions in the pathway nitrogen metabolism; (S)-allantoin degradation; (S)-ureidoglycolate from allantoate (aminidohydrolase route): step 1/1. The protein is Probable allantoicase of Pseudomonas aeruginosa (strain LESB58).